A 2767-amino-acid polypeptide reads, in one-letter code: Serine/threonine-protein kinase ATM (2767 aa).

One can recognise an FAT domain in the interval 1713-2317 (NVVMASNHCQ…FYQLYPLVFA (605 aa)). Positions 2419 to 2734 (WTNETTQCGG…KLDGREAGTM (316 aa)) constitute a PI3K/PI4K catalytic domain. Residues 2425-2431 (QCGGLNA) form a G-loop region. Positions 2601-2609 (GLGDRHTQN) are catalytic loop. An activation loop region spans residues 2621–2645 (HIDFGIAFEQGKIQTTPETVPFRLT). Residues 2735 to 2767 (GDSNVEAQVERLINEATLPSNLCMLFPGWDPHL) enclose the FATC domain.

Belongs to the PI3/PI4-kinase family. ATM subfamily.

The protein localises to the nucleus. The protein resides in the chromosome. It is found in the telomere. It carries out the reaction L-seryl-[protein] + ATP = O-phospho-L-seryl-[protein] + ADP + H(+). The enzyme catalyses L-threonyl-[protein] + ATP = O-phospho-L-threonyl-[protein] + ADP + H(+). Serine/threonine-protein kinase which recognizes the substrate consensus sequence [ST]-Q. Required to suppress spontaneous apoptosis of proliferating cells during development, and for their proper differentiation. Required for female fertility. Protects telomeres from fusion, maybe by recruiting or maintaining chromatin-modifying complexes such as Su(var)205/HP1. May activate checkpoint signaling in response to DNA double-stranded breaks induced by low-dose ionizing radiation. May phosphorylate histone H2AV. The chain is Serine/threonine-protein kinase ATM (tefu) from Drosophila melanogaster (Fruit fly).